Here is a 229-residue protein sequence, read N- to C-terminus: 2-C-methyl-D-erythritol 4-phosphate cytidylyltransferase (229 aa).

Belongs to the IspD/TarI cytidylyltransferase family. IspD subfamily.

The catalysed reaction is 2-C-methyl-D-erythritol 4-phosphate + CTP + H(+) = 4-CDP-2-C-methyl-D-erythritol + diphosphate. It functions in the pathway isoprenoid biosynthesis; isopentenyl diphosphate biosynthesis via DXP pathway; isopentenyl diphosphate from 1-deoxy-D-xylulose 5-phosphate: step 2/6. Catalyzes the formation of 4-diphosphocytidyl-2-C-methyl-D-erythritol from CTP and 2-C-methyl-D-erythritol 4-phosphate (MEP). The protein is 2-C-methyl-D-erythritol 4-phosphate cytidylyltransferase of Clostridium botulinum (strain Okra / Type B1).